A 338-amino-acid polypeptide reads, in one-letter code: Ketol-acid reductoisomerase (NADP(+)) (338 aa).

The region spanning methionine 1–threonine 181 is the KARI N-terminal Rossmann domain. NADP(+) is bound by residues tyrosine 24–glutamine 27, arginine 47, serine 50, threonine 52, and aspartate 82–glutamine 85. Histidine 107 is an active-site residue. Residue glycine 133 coordinates NADP(+). The region spanning threonine 182 to isoleucine 327 is the KARI C-terminal knotted domain. Residues aspartate 190, glutamate 194, glutamate 226, and glutamate 230 each contribute to the Mg(2+) site. Position 251 (serine 251) interacts with substrate.

This sequence belongs to the ketol-acid reductoisomerase family. Requires Mg(2+) as cofactor.

It catalyses the reaction (2R)-2,3-dihydroxy-3-methylbutanoate + NADP(+) = (2S)-2-acetolactate + NADPH + H(+). The enzyme catalyses (2R,3R)-2,3-dihydroxy-3-methylpentanoate + NADP(+) = (S)-2-ethyl-2-hydroxy-3-oxobutanoate + NADPH + H(+). It participates in amino-acid biosynthesis; L-isoleucine biosynthesis; L-isoleucine from 2-oxobutanoate: step 2/4. The protein operates within amino-acid biosynthesis; L-valine biosynthesis; L-valine from pyruvate: step 2/4. In terms of biological role, involved in the biosynthesis of branched-chain amino acids (BCAA). Catalyzes an alkyl-migration followed by a ketol-acid reduction of (S)-2-acetolactate (S2AL) to yield (R)-2,3-dihydroxy-isovalerate. In the isomerase reaction, S2AL is rearranged via a Mg-dependent methyl migration to produce 3-hydroxy-3-methyl-2-ketobutyrate (HMKB). In the reductase reaction, this 2-ketoacid undergoes a metal-dependent reduction by NADPH to yield (R)-2,3-dihydroxy-isovalerate. In Cellvibrio japonicus (strain Ueda107) (Pseudomonas fluorescens subsp. cellulosa), this protein is Ketol-acid reductoisomerase (NADP(+)).